Reading from the N-terminus, the 519-residue chain is Cytochrome P450 CYP99A1 (519 aa).

Cys-453 is a heme binding site.

It belongs to the cytochrome P450 family. Heme serves as cofactor.

It localises to the membrane. The protein is Cytochrome P450 CYP99A1 (CYP99A1) of Sorghum bicolor (Sorghum).